The chain runs to 605 residues: Protein kinase wis1 (605 aa).

The segment covering 1–20 has biased composition (polar residues); it reads MSSPNNQPLSCSLRQLSISP. The segment at 1–141 is disordered; that stretch reads MSSPNNQPLS…TPPGPFPGGL (141 aa). 2 stretches are compositionally biased toward low complexity: residues 31 to 73 and 90 to 105; these read GSLL…SSPS and RLGRSTSSRSRNSLNL. Residues 106 to 115 show a composition bias toward basic and acidic residues; that stretch reads DMKDPSEKPR. S168 is subject to Phosphoserine. The segment covering 188–200 has biased composition (polar residues); sequence SQLAGRLSNSPVK. The segment at 188–263 is disordered; the sequence is SQLAGRLSNS…PSSMASRRGL (76 aa). A compositionally biased stretch (low complexity) spans 244-256; it reads SNSNPTSPVSPSS. S253 carries the phosphoserine modification. The region spanning 320-579 is the Protein kinase domain; that stretch reads IIKLEELGKG…YHELANHPWL (260 aa). Residues 326-334 and K349 each bind ATP; that span reads LGKGNYGVV. D441 serves as the catalytic Proton acceptor. S469 carries the post-translational modification Phosphoserine. At T473 the chain carries Phosphothreonine.

This sequence belongs to the protein kinase superfamily. STE Ser/Thr protein kinase family. MAP kinase kinase subfamily. In terms of processing, dephosphorylated by pyp1 and pyp2.

It catalyses the reaction L-seryl-[protein] + ATP = O-phospho-L-seryl-[protein] + ADP + H(+). The enzyme catalyses L-threonyl-[protein] + ATP = O-phospho-L-threonyl-[protein] + ADP + H(+). It carries out the reaction L-tyrosyl-[protein] + ATP = O-phospho-L-tyrosyl-[protein] + ADP + H(+). Functionally, dosage-dependent regulator of mitosis with serine/ threonine protein kinase activity. May play a role in the integration of nutritional sensing with the control over entry into mitosis. It may interact with cdc25, wee1 and win1. May activate sty1. The chain is Protein kinase wis1 (wis1) from Schizosaccharomyces pombe (strain 972 / ATCC 24843) (Fission yeast).